A 131-amino-acid polypeptide reads, in one-letter code: Histone H2B.2 (131 aa).

Residues methionine 1–proline 19 show a composition bias toward basic and acidic residues. Residues methionine 1–arginine 37 form a disordered region. N6-acetyllysine; alternate occurs at positions 7 and 8. Glycyl lysine isopeptide (Lys-Gly) (interchain with G-Cter in SUMO); alternate cross-links involve residues lysine 7 and lysine 8. A Phosphoserine modification is found at serine 11. N6-acetyllysine is present on lysine 12. Lysine 17, lysine 18, lysine 22, and lysine 23 each carry N6-acetyllysine; alternate. Glycyl lysine isopeptide (Lys-Gly) (interchain with G-Cter in SUMO); alternate cross-links involve residues lysine 17 and lysine 18. Lysine 22 bears the N6-butyryllysine; alternate mark. Lysine 23 is subject to N6-methyllysine; alternate. Lysine 35 carries the N6-succinyllysine modification. The residue at position 38 (lysine 38) is an N6,N6-dimethyllysine. Lysine 47 bears the N6-succinyllysine mark. Residue lysine 124 forms a Glycyl lysine isopeptide (Lys-Gly) (interchain with G-Cter in ubiquitin) linkage.

The protein belongs to the histone H2B family. The nucleosome is a histone octamer containing two molecules each of H2A, H2B, H3 and H4 assembled in one H3-H4 heterotetramer and two H2A-H2B heterodimers. The octamer wraps approximately 147 bp of DNA. Interacts with NAP1. In terms of processing, monoubiquitinated by the RAD6/UBC2-BRE1 complex to form H2BK123ub1. H2BK123ub1 gives a specific tag for epigenetic transcriptional activation and is also prerequisite for H3K4me and H3K79me formation. H2BK123ub1 also modulates the formation of double-strand breaks during meiosis and is a prerequisite for DNA-damage checkpoint activation. Deubiquitination is performed by UBP8 in presence of SGF11. Post-translationally, phosphorylated by STE20 to form H2BS10ph during progression through meiotic prophase. May be correlated with chromosome condensation. H2BS10ph is also formed after H(2)O(2) treatment, and is a step leading to apoptosis. Acetylated by GCN5, a component of the SAGA complex, to form H2BK11ac and H2BK16ac. H2BK16ac can also be formed by ESA1, a component of the NuA4 histone acetyltransferase (HAT) complex. Acetylation of N-terminal lysines and particularly formation of H2BK11acK16ac has a positive effect on transcription. In terms of processing, sumoylation to form H2BK6su or H2BK7su, and probably also H2BK16su or H2BK17su, occurs preferentially near the telomeres and represses gene transcription.

The protein localises to the nucleus. Its subcellular location is the chromosome. In terms of biological role, core component of nucleosome. Nucleosomes wrap and compact DNA into chromatin, limiting DNA accessibility to the cellular machineries which require DNA as a template. Histones thereby play a central role in transcription regulation, DNA repair, DNA replication and chromosomal stability. DNA accessibility is regulated via a complex set of post-translational modifications of histones, also called histone code, and nucleosome remodeling. The sequence is that of Histone H2B.2 (HTB2) from Saccharomyces cerevisiae (strain ATCC 204508 / S288c) (Baker's yeast).